Consider the following 636-residue polypeptide: Putative lipase ATG15 (636 aa).

Residues 1 to 19 (MYKYGTVVDPAMTTNRRSR) lie on the Cytoplasmic side of the membrane. A helical; Signal-anchor for type II membrane protein membrane pass occupies residues 20–42 (LSGFRCASTARVTATLLLSFLAF). Residues 43-636 (SPSSASSDFG…DDLEFATDEM (594 aa)) are Lumenal-facing. 5 N-linked (GlcNAc...) asparagine glycosylation sites follow: Asn211, Asn233, Asn291, Asn315, and Asn477. The tract at residues 478–500 (GTETTTTSSPSTTSTTRTRTRTS) is disordered. Positions 479 to 500 (TETTTTSSPSTTSTTRTRTRTS) are enriched in low complexity.

This sequence belongs to the AB hydrolase superfamily. Lipase family. In terms of assembly, binds to both phosphatidylinositol (PI) and phosphatidylinositol 3,5-bisphosphate (PIP2).

Its subcellular location is the endosome. It is found in the multivesicular body membrane. The protein localises to the prevacuolar compartment membrane. The enzyme catalyses a triacylglycerol + H2O = a diacylglycerol + a fatty acid + H(+). Functionally, lipase which is essential for lysis of subvacuolar cytoplasm to vacuole targeted bodies and intravacuolar autophagic bodies. Involved in the lysis of intravacuolar multivesicular body (MVB) vesicles. The intravacuolar membrane disintegration by ATG15 is critical to life span extension. Autophagy is required for proper vegetative growth, asexual/sexual reproduction, and full virulence. Autophagy is particularly involved in the biosynthesis of deoxynivalenol (DON), an important virulence determinant. This chain is Putative lipase ATG15, found in Gibberella zeae (strain ATCC MYA-4620 / CBS 123657 / FGSC 9075 / NRRL 31084 / PH-1) (Wheat head blight fungus).